A 264-amino-acid polypeptide reads, in one-letter code: Thiazole synthase (264 aa).

Lys-106 acts as the Schiff-base intermediate with DXP in catalysis. Residues Gly-167, Ala-193–Gly-194, and Asn-215–Thr-216 contribute to the 1-deoxy-D-xylulose 5-phosphate site.

Belongs to the ThiG family. Homotetramer. Forms heterodimers with either ThiH or ThiS.

It is found in the cytoplasm. The catalysed reaction is [ThiS sulfur-carrier protein]-C-terminal-Gly-aminoethanethioate + 2-iminoacetate + 1-deoxy-D-xylulose 5-phosphate = [ThiS sulfur-carrier protein]-C-terminal Gly-Gly + 2-[(2R,5Z)-2-carboxy-4-methylthiazol-5(2H)-ylidene]ethyl phosphate + 2 H2O + H(+). Its pathway is cofactor biosynthesis; thiamine diphosphate biosynthesis. Functionally, catalyzes the rearrangement of 1-deoxy-D-xylulose 5-phosphate (DXP) to produce the thiazole phosphate moiety of thiamine. Sulfur is provided by the thiocarboxylate moiety of the carrier protein ThiS. In vitro, sulfur can be provided by H(2)S. This chain is Thiazole synthase, found in Stenotrophomonas maltophilia (strain R551-3).